The sequence spans 189 residues: Protein GrpE (189 aa).

A compositionally biased stretch (basic and acidic residues) spans 1–14 (MTDHTPLQPKHEIT). The interval 1–23 (MTDHTPLQPKHEITDQADQDTSA) is disordered.

It belongs to the GrpE family. In terms of assembly, homodimer.

It localises to the cytoplasm. Participates actively in the response to hyperosmotic and heat shock by preventing the aggregation of stress-denatured proteins, in association with DnaK and GrpE. It is the nucleotide exchange factor for DnaK and may function as a thermosensor. Unfolded proteins bind initially to DnaJ; upon interaction with the DnaJ-bound protein, DnaK hydrolyzes its bound ATP, resulting in the formation of a stable complex. GrpE releases ADP from DnaK; ATP binding to DnaK triggers the release of the substrate protein, thus completing the reaction cycle. Several rounds of ATP-dependent interactions between DnaJ, DnaK and GrpE are required for fully efficient folding. The polypeptide is Protein GrpE (Lawsonia intracellularis (strain PHE/MN1-00)).